Consider the following 82-residue polypeptide: Small ribosomal subunit protein bS18 (82 aa).

The interval 1 to 25 (MTEMNQTAIRRPFHRRRKTCPFSGT) is disordered.

This sequence belongs to the bacterial ribosomal protein bS18 family. Part of the 30S ribosomal subunit. Forms a tight heterodimer with protein bS6.

Functionally, binds as a heterodimer with protein bS6 to the central domain of the 16S rRNA, where it helps stabilize the platform of the 30S subunit. The sequence is that of Small ribosomal subunit protein bS18 from Bartonella henselae (strain ATCC 49882 / DSM 28221 / CCUG 30454 / Houston 1) (Rochalimaea henselae).